Reading from the N-terminus, the 1031-residue chain is Sodium/potassium-transporting ATPase subunit alpha (1031 aa).

A disordered region spans residues 1 to 33 (MADPGDLESRGKADSYSVAEKKSAPKKISKKNA). A compositionally biased stretch (basic and acidic residues) spans 7 to 23 (LESRGKADSYSVAEKKS). The span at 24–33 (APKKISKKNA) shows a compositional bias: basic residues. The next 4 helical transmembrane spans lie at 102 to 123 (MFGG…AFGI), 136 to 155 (LYLG…FSYY), 297 to 319 (FIHI…SLAM), and 326 to 354 (AIIF…TLTA). Asp382 serves as the catalytic 4-aspartylphosphate intermediate. Position 512 (Lys512) interacts with ATP. Positions 725 and 729 each coordinate Mg(2+). The next 4 helical transmembrane spans lie at 795–818 (ISPF…ILCI), 857–882 (LISL…IILA), 924–944 (LTCQ…DLII), and 961–986 (FLNF…NTGL).

The protein belongs to the cation transport ATPase (P-type) (TC 3.A.3) family. Type IIC subfamily. As to quaternary structure, the sodium/potassium-transporting ATPase is composed of a catalytic alpha subunit, an auxiliary non-catalytic beta subunit and an additional regulatory subunit.

The protein resides in the cell membrane. It carries out the reaction K(+)(out) + Na(+)(in) + ATP + H2O = K(+)(in) + Na(+)(out) + ADP + phosphate + H(+). Its activity is regulated as follows. This alpha subunit is resistant to ouabain. Its function is as follows. This is the catalytic component of the active enzyme, which catalyzes the hydrolysis of ATP coupled with the exchange of sodium and potassium ions across the plasma membrane. This action creates the electrochemical gradient of sodium and potassium ions, providing the energy for active transport of various nutrients. The sequence is that of Sodium/potassium-transporting ATPase subunit alpha from Hydra vulgaris (Hydra).